The primary structure comprises 37 residues: Cytochrome b6-f complex subunit 5 (37 aa).

The chain crosses the membrane as a helical span at residues 5-25 (LLSGIVLGLITVSALGLFVAA).

It belongs to the PetG family. In terms of assembly, the 4 large subunits of the cytochrome b6-f complex are cytochrome b6, subunit IV (17 kDa polypeptide, PetD), cytochrome f and the Rieske protein, while the 4 small subunits are PetG, PetL, PetM and PetN. The complex functions as a dimer.

The protein resides in the plastid. It localises to the chloroplast thylakoid membrane. Its function is as follows. Component of the cytochrome b6-f complex, which mediates electron transfer between photosystem II (PSII) and photosystem I (PSI), cyclic electron flow around PSI, and state transitions. PetG is required for either the stability or assembly of the cytochrome b6-f complex. The sequence is that of Cytochrome b6-f complex subunit 5 from Phaeodactylum tricornutum (strain CCAP 1055/1).